The primary structure comprises 307 residues: Taste receptor type 2 member 10 (307 aa).

Over 1–6 (MLRVVE) the chain is Extracellular. The helical transmembrane segment at 7-27 (GIFIFVVISESVFGVLGNGFI) threads the bilayer. At 28-42 (GLVNCIDCAKNKLST) the chain is on the cytoplasmic side. A helical transmembrane segment spans residues 43–63 (IGFILTGLAISRIFLIWIIIT). The Extracellular portion of the chain corresponds to 64 to 100 (DGFIQIFSPNIYASSNLIEYISYFWVIGNQSSMWFAT). The chain crosses the membrane as a helical span at residues 101 to 121 (SLSIFYFLKIANFSNYIFLWL). At 122-126 (KSRTN) the chain is on the cytoplasmic side. A helical transmembrane segment spans residues 127–147 (MVLPFMIVFLLISSLLNFAYI). The Extracellular segment spans residues 148-179 (AKILNDYKMKNDTVWDLNMYKSEYFIKQILLN). The N-linked (GlcNAc...) asparagine glycan is linked to Asn-158. The helical transmembrane segment at 180–200 (LGVIFFFTLSLITCVLLIISL) threads the bilayer. Over 201-227 (WRHNRQMQSNVTGLRDSNTEAHVKAMK) the chain is Cytoplasmic. Residues 228-248 (VLISFIILFILYFIGMAIEIS) traverse the membrane as a helical segment. Residues 249 to 257 (YFTVRENKL) are Extracellular-facing. The chain crosses the membrane as a helical span at residues 258-278 (LLMFGMTTTAIYPWGHSFILI). At 279–307 (LGNSKLKQASLRVLQQLKCCEKRKNLRVT) the chain is on the cytoplasmic side.

The protein belongs to the G-protein coupled receptor T2R family.

Its subcellular location is the membrane. Functionally, receptor that may play a role in the perception of bitterness and is gustducin-linked. May play a role in sensing the chemical composition of the gastrointestinal content. The activity of this receptor may stimulate alpha gustducin, mediate PLC-beta-2 activation and lead to the gating of TRPM5. The polypeptide is Taste receptor type 2 member 10 (TAS2R10) (Pan paniscus (Pygmy chimpanzee)).